A 143-amino-acid polypeptide reads, in one-letter code: Transcriptional regulator MraZ (143 aa).

SpoVT-AbrB domains are found at residues 5–47 (EYKH…SLKE) and 76–119 (ACEC…SENN).

The protein belongs to the MraZ family. As to quaternary structure, forms oligomers.

The protein localises to the cytoplasm. It is found in the nucleoid. The protein is Transcriptional regulator MraZ of Caldicellulosiruptor bescii (strain ATCC BAA-1888 / DSM 6725 / KCTC 15123 / Z-1320) (Anaerocellum thermophilum).